The following is a 270-amino-acid chain: HTH-type transcriptional repressor DrrR1 (270 aa).

The span at 1-11 (MESGTSRTSDT) shows a compositional bias: low complexity. A disordered region spans residues 1–28 (MESGTSRTSDTGGTGRAGSTETSGSGDI). The HTH tetR-type domain occupies 49-109 (TLTLDRVVEA…LMLDRVQRPS (61 aa)). The H-T-H motif DNA-binding region spans 72-91 (SMRRVAAELGTGTMSLYRYV).

It is found in the cytoplasm. With respect to regulation, daunorubicin and doxorubicin can induce dissociation of DrrR1 from its DNA complex. Ampicillin cannot release DrrR1 from the DNA complex at the same concentrations. Its function is as follows. Transcriptional regulator that modulates the expression of the drrA2-drrB2 genes, which encode an ABC transporter involved in daunorubicin efflux, in response to intracellular daunorubicin/doxorubicin accumulation. In the absence of daunorubicin or doxorubicin, binds directly to the drrA2-drrB2 promoter region and negatively regulates expression of the genes. In the presence of daunorubicin or doxorubicin, DrrR1 dissociates from DNA, leading to the transcription of the genes. The protein is HTH-type transcriptional repressor DrrR1 of Streptomyces coeruleorubidus.